A 346-amino-acid chain; its full sequence is 3-keto-steroid reductase ERG27 (346 aa).

The NADP(+) site is built by Leu19, Thr42, and Lys48. Residues Ser182 and Tyr205 each act as proton donor in the active site. Residues Tyr205, Lys209, and Ser241 each contribute to the NADP(+) site. Residue Lys209 is the Lowers pKa of active site Tyr of the active site. Residues 242 to 262 form a helical membrane-spanning segment; the sequence is FSFFQYLNVFTYYGMLFLFYL. Asn272 carries N-linked (GlcNAc...) asparagine glycosylation.

The protein belongs to the short-chain dehydrogenases/reductases (SDR) family. ERG27 subfamily. Heterotetramer of ERG25, ERG26, ERG27 and ERG28. ERG28 acts as a scaffold to tether ERG27 and other 4,4-demethylation-related enzymes, forming a demethylation enzyme complex, in the endoplasmic reticulum. Interacts with ERG25 and ERG28. Also interacts with ERG7, but only in lipid particles.

Its subcellular location is the endoplasmic reticulum membrane. The protein resides in the lipid droplet. It carries out the reaction 3-dehydro-4alpha-methylzymosterol + NADPH + H(+) = 4alpha-methylzymosterol + NADP(+). Its pathway is steroid biosynthesis; zymosterol biosynthesis; zymosterol from lanosterol: step 5/6. Its function is as follows. 3-keto-steroid reductase; part of the third module of ergosterol biosynthesis pathway that includes the late steps of the pathway. ERG27 is a catalytic component of the C-4 demethylation complex that catalyzes the reduction of the keto group on the C-3. The third module or late pathway involves the ergosterol synthesis itself through consecutive reactions that mainly occur in the endoplasmic reticulum (ER) membrane. Firstly, the squalene synthase ERG9 catalyzes the condensation of 2 farnesyl pyrophosphate moieties to form squalene, which is the precursor of all steroids. Squalene synthase is crucial for balancing the incorporation of farnesyl diphosphate (FPP) into sterol and nonsterol isoprene synthesis. Secondly, the squalene epoxidase ERG1 catalyzes the stereospecific oxidation of squalene to (S)-2,3-epoxysqualene, which is considered to be a rate-limiting enzyme in steroid biosynthesis. Then, the lanosterol synthase ERG7 catalyzes the cyclization of (S)-2,3 oxidosqualene to lanosterol, a reaction that forms the sterol core. In the next steps, lanosterol is transformed to zymosterol through a complex process involving various demethylation, reduction and desaturation reactions. The lanosterol 14-alpha-demethylase ERG11 (also known as CYP51) catalyzes C14-demethylation of lanosterol to produce 4,4'-dimethyl cholesta-8,14,24-triene-3-beta-ol, which is critical for ergosterol biosynthesis. The C-14 reductase ERG24 reduces the C14=C15 double bond of 4,4-dimethyl-cholesta-8,14,24-trienol to produce 4,4-dimethyl-cholesta-8,24-dienol. 4,4-dimethyl-cholesta-8,24-dienol is substrate of the C-4 demethylation complex ERG25-ERG26-ERG27 in which ERG25 catalyzes the three-step monooxygenation required for the demethylation of 4,4-dimethyl and 4alpha-methylsterols, ERG26 catalyzes the oxidative decarboxylation that results in a reduction of the 3-beta-hydroxy group at the C-3 carbon to an oxo group, and ERG27 is responsible for the reduction of the keto group on the C-3. ERG28 has a role as a scaffold to help anchor ERG25, ERG26 and ERG27 to the endoplasmic reticulum and ERG29 regulates the activity of the iron-containing C4-methylsterol oxidase ERG25. Then, the sterol 24-C-methyltransferase ERG6 catalyzes the methyl transfer from S-adenosyl-methionine to the C-24 of zymosterol to form fecosterol. The C-8 sterol isomerase ERG2 catalyzes the reaction which results in unsaturation at C-7 in the B ring of sterols and thus converts fecosterol to episterol. The sterol-C5-desaturase ERG3 then catalyzes the introduction of a C-5 double bond in the B ring to produce 5-dehydroepisterol. The C-22 sterol desaturase ERG5 further converts 5-dehydroepisterol into ergosta-5,7,22,24(28)-tetraen-3beta-ol by forming the C-22(23) double bond in the sterol side chain. Finally, ergosta-5,7,22,24(28)-tetraen-3beta-ol is substrate of the C-24(28) sterol reductase ERG4 to produce ergosterol. Facilitates the association of ERG7 with lipid particles preventing its digestion in the endoplasmic reticulum and the lipid particles. This Candida albicans (strain SC5314 / ATCC MYA-2876) (Yeast) protein is 3-keto-steroid reductase ERG27.